A 208-amino-acid polypeptide reads, in one-letter code: Large ribosomal subunit protein uL3 (208 aa).

A disordered region spans residues 116 to 148 (GFQGVIKRHGQSRGPMAHGSRYHRRPGSMGPVA).

It belongs to the universal ribosomal protein uL3 family. Part of the 50S ribosomal subunit. Forms a cluster with proteins L14 and L19.

Its function is as follows. One of the primary rRNA binding proteins, it binds directly near the 3'-end of the 23S rRNA, where it nucleates assembly of the 50S subunit. The polypeptide is Large ribosomal subunit protein uL3 (Streptococcus pyogenes serotype M6 (strain ATCC BAA-946 / MGAS10394)).